Consider the following 397-residue polypeptide: Tauropine dehydrogenase (397 aa).

Belongs to the lysopine/nopaline/octopine/opine/vitopine dehydrogenases family.

The enzyme catalyses tauropine + NAD(+) + H2O = taurine + pyruvate + NADH + H(+). Subject to substrate inhibition by pyruvate for the reverse reaction but not for the forward reaction of the tauropine dehydrogenase activity. Its function is as follows. May play a role in maintaining a redox balance during environmental and functional hypoxia. Exhibits high specificity for taurine and in addition, requires both alpha amino group and C-2 carbon chain length as a critical factor for active site binding of the amino acid. A methyl group in the beta position may be critical for active site binding of the keto acid. In the reverse reaction requires NAD(H) for the activity but not NADP(H). This is Tauropine dehydrogenase from Arabella iricolor (Opal worm).